We begin with the raw amino-acid sequence, 353 residues long: MNGTEGDNFYVPFSNKTGLARSPYEYPQYYLAEPWKYSALAAYMFFLILVGFPVNFLTLFVTVQHKKLRTPLNYILLNLAMANLFMVLFGFTVTMYTSMNGYFVFGPTMCSIEGFFATLGGEVALWSLVVLAIERYIVICKPMGNFRFGNTHAIMGVAFTWIMALACAAPPLVGWSRYIPEGMQCSCGPDYYTLNPNFNNESYVVYMFVVHFLVPFVIIFFCYGRLLCTVKEAAAAQQESASTQKAEKEVTRMVVLMVIGFLVCWVPYASVAFYIFTHQGSDFGATFMTLPAFFAKSSALYNPVIYILMNKQFRNCMITTLCCGKNPLGDDESGASTSKTEVSSVSTSPVSPA.

At 1 to 36 (MNGTEGDNFYVPFSNKTGLARSPYEYPQYYLAEPWK) the chain is on the extracellular side. N-linked (GlcNAc...) asparagine glycans are attached at residues Asn2 and Asn15. The chain crosses the membrane as a helical span at residues 37 to 61 (YSALAAYMFFLILVGFPVNFLTLFV). Residues 62–73 (TVQHKKLRTPLN) lie on the Cytoplasmic side of the membrane. Residues 74–96 (YILLNLAMANLFMVLFGFTVTMY) form a helical membrane-spanning segment. Topologically, residues 97–110 (TSMNGYFVFGPTMC) are extracellular. A disulfide bond links Cys110 and Cys187. The helical transmembrane segment at 111–133 (SIEGFFATLGGEVALWSLVVLAI) threads the bilayer. The short motif at 134–136 (ERY) is the 'Ionic lock' involved in activated form stabilization element. Residues 134–152 (ERYIVICKPMGNFRFGNTH) are Cytoplasmic-facing. The helical transmembrane segment at 153-173 (AIMGVAFTWIMALACAAPPLV) threads the bilayer. Residues 174-202 (GWSRYIPEGMQCSCGPDYYTLNPNFNNES) are Extracellular-facing. A helical transmembrane segment spans residues 203-224 (YVVYMFVVHFLVPFVIIFFCYG). Residues 225-252 (RLLCTVKEAAAAQQESASTQKAEKEVTR) lie on the Cytoplasmic side of the membrane. The chain crosses the membrane as a helical span at residues 253–274 (MVVLMVIGFLVCWVPYASVAFY). Residues 275-286 (IFTHQGSDFGAT) lie on the Extracellular side of the membrane. Residues 287 to 308 (FMTLPAFFAKSSALYNPVIYIL) traverse the membrane as a helical segment. Lys296 bears the N6-(retinylidene)lysine mark. Residues 309-353 (MNKQFRNCMITTLCCGKNPLGDDESGASTSKTEVSSVSTSPVSPA) lie on the Cytoplasmic side of the membrane. The segment at 330 to 353 (DDESGASTSKTEVSSVSTSPVSPA) is disordered. The segment covering 336-353 (STSKTEVSSVSTSPVSPA) has biased composition (low complexity).

It belongs to the G-protein coupled receptor 1 family. Opsin subfamily. In terms of processing, phosphorylated on some or all of the serine and threonine residues present in the C-terminal region. Post-translationally, contains one covalently linked retinal chromophore. Short photoreceptor cells.

It localises to the membrane. The protein localises to the cell projection. The protein resides in the cilium. It is found in the photoreceptor outer segment. In terms of biological role, photoreceptor required for image-forming vision at low light intensity. While most salt water fish species use retinal as chromophore, most freshwater fish use 3-dehydroretinal, or a mixture of retinal and 3-dehydroretinal. Light-induced isomerization of 11-cis to all-trans retinal triggers a conformational change that activates signaling via G-proteins. Subsequent receptor phosphorylation mediates displacement of the bound G-protein alpha subunit by arrestin and terminates signaling. The protein is Rhodopsin (RHO) of Lethenteron camtschaticum (Japanese lamprey).